The primary structure comprises 400 residues: Succinate--glutarate CoA-transferase (400 aa).

Residue D181 is the Nucleophile of the active site.

Belongs to the CoA-transferase III family.

The enzyme catalyses glutarate + succinyl-CoA = glutaryl-CoA + succinate. It participates in amino-acid degradation. It functions in the pathway cofactor biosynthesis; biotin biosynthesis. Functionally, is involved in L-lysine degradation and provides glutaryl-CoA for biotin synthesis. Catalyzes the conversion of glutarate to glutaryl-CoA via the transfer of CoA from succinyl-CoA. The protein is Succinate--glutarate CoA-transferase of Agrobacterium fabrum (strain C58 / ATCC 33970) (Agrobacterium tumefaciens (strain C58)).